A 563-amino-acid chain; its full sequence is Protein disulfide isomerase-like 1-4 (563 aa).

The N-terminal stretch at 1-22 (MRSRSLLLVALATLLLHASASA) is a signal peptide. Residues 40 to 64 (NDPDGWLQEGSPDDDDDDDLFHHGQ) are disordered. Residues 46–180 (LQEGSPDDDD…IVSWVNKKLA (135 aa)) enclose the Thioredoxin 1 domain. N-linked (GlcNAc...) asparagine glycosylation is present at Asn-82. Active-site nucleophile residues include Cys-102 and Cys-105. Cys-102 and Cys-105 are joined by a disulfide. N-linked (GlcNAc...) asparagine glycosylation is found at Asn-185 and Asn-315. In terms of domain architecture, Thioredoxin 2 spans 394-523 (FLEEKLTPFY…MYKFIKKHAS (130 aa)). Residues Cys-444 and Cys-447 each act as nucleophile in the active site. The cysteines at positions 444 and 447 are disulfide-linked. Residues 529-542 (KRPDSSATKTEKDQ) are compositionally biased toward basic and acidic residues. The tract at residues 529–563 (KRPDSSATKTEKDQSTASTNLRGERSSGTNFKDEL) is disordered. Over residues 543–563 (STASTNLRGERSSGTNFKDEL) the composition is skewed to polar residues. The Prevents secretion from ER motif lies at 560–563 (KDEL).

The protein belongs to the protein disulfide isomerase family.

It is found in the endoplasmic reticulum lumen. It carries out the reaction Catalyzes the rearrangement of -S-S- bonds in proteins.. Acts as a protein-folding catalyst that interacts with nascent polypeptides to catalyze the formation, isomerization, and reduction or oxidation of disulfide bonds. May play a role in storage protein biogenesis. This Oryza sativa subsp. japonica (Rice) protein is Protein disulfide isomerase-like 1-4 (PDIL1-4).